A 684-amino-acid chain; its full sequence is Threonine--tRNA ligase (684 aa).

The TGS domain occupies 1 to 60 (MSISITLHRSGTSRTQQVDTTTTGLDLFGSDRAVVAMRVDGNLVDLQRELHDGAEVEPVE). The catalytic stretch occupies residues 256 to 567 (DHRKLGAELD…LTEHYAGAFP (312 aa)). Residues Cys-361, His-412, and His-544 each contribute to the Zn(2+) site.

Belongs to the class-II aminoacyl-tRNA synthetase family. As to quaternary structure, homodimer. It depends on Zn(2+) as a cofactor.

It localises to the cytoplasm. It catalyses the reaction tRNA(Thr) + L-threonine + ATP = L-threonyl-tRNA(Thr) + AMP + diphosphate + H(+). In terms of biological role, catalyzes the attachment of threonine to tRNA(Thr) in a two-step reaction: L-threonine is first activated by ATP to form Thr-AMP and then transferred to the acceptor end of tRNA(Thr). Also edits incorrectly charged L-seryl-tRNA(Thr). The sequence is that of Threonine--tRNA ligase from Cutibacterium acnes (strain DSM 16379 / KPA171202) (Propionibacterium acnes).